Here is a 573-residue protein sequence, read N- to C-terminus: MDEGGLPLLPDSLVYQIFLSLGPADVLAAGLVCRQWQAVSRDEFLWKEQFYRYYQVARDVPRHPAATSWYEEFRRLYDMVPCVEVQTLKEHTDQVLHLSFSHSGYQFASCSKDCTVKIWNNDLTISLLHSADMRPYNWSYTQFSQFNQDDSLLLASGVFLGPHNSSSGEIAVISLDSFALLSRVRNKPYDVFGCWLTETSLISGNLHRIGDITSCSVLWLNNAFQDVESENVNVVKRLFKIQNLNASTIRTVMVADCSRFDSPDLLLDASDQAGLPCRVFDLGGDTEEEATDPGLHTSGSDHVKKGLRRVFDSVLDGHGQLSDCALETKVAELLAQGHTKPPECNDADTRNKYLIFTTGCLTYSPHQIGIKQILPHQMTTAGPVLGEGRGSDAFFDALDHVIDVHGHIIGMGLSPDNRYLYVNSRAWPPGSVVADPMQPPPIAEEIDLLVFDLKTMREVKRALRAHRAYTPNDECFFIFLDVSRDFVASGAEDRHGYIWDRHYNICLAKLRHEDVVNSVAFSPQEQELLLTASDDATIKAWRSPRIVRVLQAPRPRPRPRPRPFFSWFASHRR.

Positions 3–49 (EGGLPLLPDSLVYQIFLSLGPADVLAAGLVCRQWQAVSRDEFLWKEQ) constitute an F-box domain. A WD 1 repeat occupies 90–129 (EHTDQVLHLSFSHSGYQFASCSKDCTVKIWNNDLTISLLH). Ser151 is modified (phosphoserine; by PLK4). A D-box motif is present at residues 308–316 (RRVFDSVLD). WD repeat units lie at residues 470 to 509 (TPNDECFFIFLDVSRDFVASGAEDRHGYIWDRHYNICLAK) and 511 to 551 (RHED…RVLQ).

This sequence belongs to the FBXW5 family. As to quaternary structure, part of the SCF (SKP1-CUL1-F-box) E3 ubiquitin-protein ligase complex SCF(FBXW5) composed of CUL1, SKP1, RBX1 and FBXW5. Component of the DCX(FBXW5) E3 ubiquitin ligase complex, at least composed of (CUL4A or CUL4B), DDB1, FBXW5 and RBX1. Interacts with CDC20, TSC1, TSC2 and SASS6. Interacts with EPS8. Interacts with TNFAIP8L1; TNFAIP8L1 competes with TSC2 to bind FBXW5 increasing TSC2 stability by preventing its ubiquitination. Post-translationally, phosphorylated at Ser-151 by PLK4 during the G1/S transition, leading to inhibit its ability to ubiquitinate SASS6. Ubiquitinated and degraded by the APC/C complex during mitosis and G1 phase. In terms of tissue distribution, widely expressed in adult and embryonal tissues.

The protein localises to the cytoplasm. The protein operates within protein modification; protein ubiquitination. Substrate recognition component of both SCF (SKP1-CUL1-F-box protein) and DCX (DDB1-CUL4-X-box) E3 ubiquitin-protein ligase complexes. Substrate-specific adapter of the DCX(FBXW5) E3 ubiquitin-protein ligase complex which mediates the polyubiquitination and subsequent degradation of TSC2. May also act as a negative regulator of MAP3K7/TAK1 signaling in the interleukin-1B (IL1B) signaling pathway. Substrate recognition component of the SCF(FBXW5) E3 ubiquitin-protein ligase complex which mediates the ubiquitination and subsequent proteasomal degradation of SASS6 during S phase, leading to prevent centriole reduplication. The SCF(FBXW5) complex also mediates ubiquitination and degradation of actin-regulator EPS8 during G2 phase, leading to the transient degradation of EPS8 and subsequent cell shape changes required to allow mitotic progression. This is F-box/WD repeat-containing protein 5 (Fbxw5) from Mus musculus (Mouse).